A 279-amino-acid polypeptide reads, in one-letter code: Fructose-1,6-bisphosphatase class 1 (279 aa).

Residues glutamate 65, aspartate 85, leucine 87, and aspartate 88 each coordinate Mg(2+). Substrate contacts are provided by residues 88–91 (DGSS), tyrosine 190, and lysine 221. A Mg(2+)-binding site is contributed by glutamate 227.

It belongs to the FBPase class 1 family. In terms of assembly, homotetramer. The cofactor is Mg(2+).

The protein resides in the cytoplasm. The catalysed reaction is beta-D-fructose 1,6-bisphosphate + H2O = beta-D-fructose 6-phosphate + phosphate. It participates in carbohydrate biosynthesis; gluconeogenesis. This chain is Fructose-1,6-bisphosphatase class 1, found in Helicobacter hepaticus (strain ATCC 51449 / 3B1).